We begin with the raw amino-acid sequence, 440 residues long: Chromosome partition protein MukF (440 aa).

The interval 208-236 is leucine-zipper; that stretch reads LSETSGTLRELQDTLEAAGDKLQANLLQI.

It belongs to the MukF family. Interacts, and probably forms a ternary complex, with MukE and MukB via its C-terminal region. The complex formation is stimulated by calcium or magnesium. It is required for an interaction between MukE and MukB.

The protein resides in the cytoplasm. Its subcellular location is the nucleoid. Involved in chromosome condensation, segregation and cell cycle progression. May participate in facilitating chromosome segregation by condensation DNA from both sides of a centrally located replisome during cell division. Not required for mini-F plasmid partitioning. Probably acts via its interaction with MukB and MukE. Overexpression results in anucleate cells. It has a calcium binding activity. The protein is Chromosome partition protein MukF of Cronobacter sakazakii (strain ATCC BAA-894) (Enterobacter sakazakii).